A 216-amino-acid chain; its full sequence is MVCVLTLAASAGGLAVLLIVRLWAVLRSHPVTPRQSLGLLIVAGSGGHTAEILRLVGSLSGAYSPRHYVIAESDEMSAKKIHSLELARAQNDSTTEHTEYYLHRIPRSREVRQSWLSSVFTTLYSIWFSFPLVHRIKPDLVLCNGPGTCVPICVSALLLGILGIKKVIIVYVESICRVETLSLSGKILWHLSDYFIVQWPTLKEKYPKSVYLGRIV.

Over 1 to 3 (MVC) the chain is Lumenal. The chain crosses the membrane as a helical span at residues 4–24 (VLTLAASAGGLAVLLIVRLWA). Over 25–216 (VLRSHPVTPR…PKSVYLGRIV (192 aa)) the chain is Cytoplasmic.

It belongs to the ALG14 family. As to quaternary structure, forms with ALG13 the active heterodimeric UDP-N-acetylglucosamine transferase complex.

The protein resides in the endoplasmic reticulum membrane. Part of the UDP-N-acetylglucosamine transferase complex that operates in the biosynthetic pathway of dolichol-linked oligosaccharides, the glycan precursors employed in protein asparagine (N)-glycosylation. The assembly of dolichol-linked oligosaccharides begins on the cytosolic side of the endoplasmic reticulum membrane and finishes in its lumen. The sequential addition of sugars to dolichol pyrophosphate produces dolichol-linked oligosaccharides containing fourteen sugars, including two GlcNAcs, nine mannoses and three glucoses. Once assembled, the oligosaccharides are transferred from the lipid to nascent proteins by oligosaccharyltransferases. Functions as a protein-membrane adapter recruiting ALG13 at the cytoplasmic face of the endoplasmic reticulum, where the complex catalyzes the second step of dolichol pyrophosphate biosynthesis, transferring a beta1,4-linked N-acetylglucosamine (GlcNAc) from UDP-GlcNAc to GlcNAc-pyrophosphatedolichol (Gn-PDol) to produce N,N'-diacetylchitobiosyl diphosphodolichol. N,N'-diacetylchitobiosyl diphosphodolichol is a substrate for ALG1, the following enzyme in the biosynthetic pathway. The polypeptide is UDP-N-acetylglucosamine transferase subunit ALG14 (Rattus norvegicus (Rat)).